Consider the following 21-residue polypeptide: Fibrinogen beta chain (21 aa).

Positions 1 to 11 (EFPTDYDEGED) are enriched in acidic residues. Residues 1–21 (EFPTDYDEGEDDRPKVGLGAR) form a disordered region. At Y6 the chain carries Sulfotyrosine.

Heterohexamer; disulfide linked. Contains 2 sets of 3 non-identical chains (alpha, beta and gamma). The 2 heterotrimers are in head to head conformation with the N-termini in a small central domain. Conversion of fibrinogen to fibrin is triggered by thrombin, which cleaves fibrinopeptides A and B from alpha and beta chains, and thus exposes the N-terminal polymerization sites responsible for the formation of the soft clot.

It is found in the secreted. Cleaved by the protease thrombin to yield monomers which, together with fibrinogen alpha (FGA) and fibrinogen gamma (FGG), polymerize to form an insoluble fibrin matrix. Fibrin has a major function in hemostasis as one of the primary components of blood clots. In addition, functions during the early stages of wound repair to stabilize the lesion and guide cell migration during re-epithelialization. Was originally thought to be essential for platelet aggregation, based on in vitro studies using anticoagulated blood. However subsequent studies have shown that it is not absolutely required for thrombus formation in vivo. Enhances expression of SELP in activated platelets. Maternal fibrinogen is essential for successful pregnancy. Fibrin deposition is also associated with infection, where it protects against IFNG-mediated hemorrhage. May also facilitate the antibacterial immune response via both innate and T-cell mediated pathways. The polypeptide is Fibrinogen beta chain (FGB) (Bison bonasus (European bison)).